The chain runs to 186 residues: Periplasmic nitrate reductase, electron transfer subunit (186 aa).

The first 20 residues, 1 to 20 (MKTSKLNFLTLVASTGLALA), serve as a signal peptide directing secretion. Positions 87, 102, 105, 106, 123, 144, 147, and 148 each coordinate heme c.

The protein belongs to the NapB family. In terms of assembly, component of the periplasmic nitrate reductase NapAB complex composed of NapA and NapB. Binds 2 heme C groups per subunit.

The protein resides in the periplasm. Its function is as follows. Electron transfer subunit of the periplasmic nitrate reductase complex NapAB. Transfers electrons to NapA subunit, thus allowing electron flow between membrane and periplasm. Essential for periplasmic nitrate reduction with nitrate as the terminal electron acceptor. The polypeptide is Periplasmic nitrate reductase, electron transfer subunit (Wolinella succinogenes (strain ATCC 29543 / DSM 1740 / CCUG 13145 / JCM 31913 / LMG 7466 / NCTC 11488 / FDC 602W) (Vibrio succinogenes)).